A 680-amino-acid polypeptide reads, in one-letter code: tRNA 5-methylaminomethyl-2-thiouridine biosynthesis bifunctional protein MnmC (680 aa).

The tract at residues 1–245 is tRNA (mnm(5)s(2)U34)-methyltransferase; that stretch reads MSHPPIQTAT…KREMLTGILP (245 aa). The FAD-dependent cmnm(5)s(2)U34 oxidoreductase stretch occupies residues 270–680; it reads IGGGIVSALT…PVQQRVSVLS (411 aa).

In the N-terminal section; belongs to the methyltransferase superfamily. tRNA (mnm(5)s(2)U34)-methyltransferase family. It in the C-terminal section; belongs to the DAO family. FAD is required as a cofactor.

Its subcellular location is the cytoplasm. The catalysed reaction is 5-aminomethyl-2-thiouridine(34) in tRNA + S-adenosyl-L-methionine = 5-methylaminomethyl-2-thiouridine(34) in tRNA + S-adenosyl-L-homocysteine + H(+). In terms of biological role, catalyzes the last two steps in the biosynthesis of 5-methylaminomethyl-2-thiouridine (mnm(5)s(2)U) at the wobble position (U34) in tRNA. Catalyzes the FAD-dependent demodification of cmnm(5)s(2)U34 to nm(5)s(2)U34, followed by the transfer of a methyl group from S-adenosyl-L-methionine to nm(5)s(2)U34, to form mnm(5)s(2)U34. This chain is tRNA 5-methylaminomethyl-2-thiouridine biosynthesis bifunctional protein MnmC, found in Yersinia enterocolitica serotype O:8 / biotype 1B (strain NCTC 13174 / 8081).